The following is a 764-amino-acid chain: Ribosomal protein S6 kinase alpha-6 (764 aa).

Positions 1–24 (MLPFAPVEDPWDQEDMEVFGSTSS) are disordered. The Protein kinase 1 domain occupies 93 to 350 (FDLLKVLGQG…VEEVKRHAFF (258 aa)). ATP-binding positions include 99 to 107 (LGQGSFGKV) and K125. D218 serves as the catalytic Proton acceptor. Phosphoserine is present on residues S252, S392, and S409. Residues 351-420 (ASIDWNKLYK…VATSIAEEYK (70 aa)) form the AGC-kinase C-terminal domain. A Protein kinase 2 domain is found at 446-706 (YELKEDIGIG…VLKHPWITQR (261 aa)). Residues 452–460 (IGIGSYSVC) and K475 contribute to the ATP site. The active-site Proton acceptor is the D563. T601 is modified (phosphothreonine).

It belongs to the protein kinase superfamily. AGC Ser/Thr protein kinase family. S6 kinase subfamily. As to quaternary structure, forms a complex with MAPK3/ERK1 but not with MAPK9 or MAPK14 in serum-starved cells. Requires Mg(2+) as cofactor. In terms of processing, phosphorylated at Ser-252, Ser-392, and Ser-409 in serum-starved cells.

It is found in the cytoplasm. The protein resides in the cytosol. Its subcellular location is the nucleus. It catalyses the reaction L-seryl-[protein] + ATP = O-phospho-L-seryl-[protein] + ADP + H(+). The catalysed reaction is L-threonyl-[protein] + ATP = O-phospho-L-threonyl-[protein] + ADP + H(+). Its activity is regulated as follows. Constitutively activated by phosphorylation at Ser-252, Ser-392, and Ser-409 in serum-starved cells. Does not require growth factor stimulation for significant kinase activity. Constitutively active serine/threonine-protein kinase that exhibits growth-factor-independent kinase activity and that may participate in p53/TP53-dependent cell growth arrest signaling and play an inhibitory role during embryogenesis. The sequence is that of Ribosomal protein S6 kinase alpha-6 (Rps6ka6) from Mus musculus (Mouse).